A 369-amino-acid polypeptide reads, in one-letter code: Probable N-acetyltransferase 16 (369 aa).

Positions 1-49 are disordered; the sequence is MKLEASCGTATSEVPKPEKKTARDAEPSSETRPQEVEAEPRSGSGPEAE. Basic and acidic residues predominate over residues 15–26; the sequence is PKPEKKTARDAE. An N-acetyltransferase domain is found at 53 to 188; that stretch reads LDFVVATERE…QGILLVRFNA (136 aa).

Probable N-acetyltransferase. Shows only trace activity toward L-His and no N-acetyltransferase activity toward other amino acids. The physiological substrate of this enzyme is unknown. The protein is Probable N-acetyltransferase 16 (NAT16) of Homo sapiens (Human).